Here is a 343-residue protein sequence, read N- to C-terminus: Protein RecA (343 aa).

64 to 71 contacts ATP; the sequence is GPESSGKT.

It belongs to the RecA family.

The protein localises to the cytoplasm. Functionally, can catalyze the hydrolysis of ATP in the presence of single-stranded DNA, the ATP-dependent uptake of single-stranded DNA by duplex DNA, and the ATP-dependent hybridization of homologous single-stranded DNAs. It interacts with LexA causing its activation and leading to its autocatalytic cleavage. The chain is Protein RecA from Bacillus cereus (strain ATCC 10987 / NRS 248).